The following is a 338-amino-acid chain: Glycerol-3-phosphate dehydrogenase [NAD(P)+] (338 aa).

Positions 13, 14, and 108 each coordinate NADPH. Sn-glycerol 3-phosphate is bound by residues Lys-108, Gly-139, and Ser-141. Residue Ala-143 participates in NADPH binding. Sn-glycerol 3-phosphate is bound by residues Lys-194, Asp-247, Ser-257, Arg-258, and Asn-259. The Proton acceptor role is filled by Lys-194. NADPH is bound at residue Arg-258. Positions 282 and 284 each coordinate NADPH.

It belongs to the NAD-dependent glycerol-3-phosphate dehydrogenase family.

The protein localises to the cytoplasm. The catalysed reaction is sn-glycerol 3-phosphate + NAD(+) = dihydroxyacetone phosphate + NADH + H(+). It catalyses the reaction sn-glycerol 3-phosphate + NADP(+) = dihydroxyacetone phosphate + NADPH + H(+). Its pathway is membrane lipid metabolism; glycerophospholipid metabolism. Functionally, catalyzes the reduction of the glycolytic intermediate dihydroxyacetone phosphate (DHAP) to sn-glycerol 3-phosphate (G3P), the key precursor for phospholipid synthesis. The protein is Glycerol-3-phosphate dehydrogenase [NAD(P)+] of Streptococcus pneumoniae (strain JJA).